A 525-amino-acid chain; its full sequence is Asparagine synthetase [glutamine-hydrolyzing] (525 aa).

Cysteine 2 acts as the For GATase activity in catalysis. Positions 2–185 constitute a Glutamine amidotransferase type-2 domain; it reads CGILAVLGCS…PGHLYSSKEG (184 aa). L-glutamine-binding positions include 50-54, 75-77, and aspartate 98; these read RLAII and NGE. The 325-residue stretch at 193–517 folds into the Asparagine synthetase domain; that stretch reads PPWFSEVIPS…QIDSPWRSKC (325 aa). ATP-binding positions include leucine 231, valine 267, and 341–342; that span reads SG.

The catalysed reaction is L-aspartate + L-glutamine + ATP + H2O = L-asparagine + L-glutamate + AMP + diphosphate + H(+). Its pathway is amino-acid biosynthesis; L-asparagine biosynthesis; L-asparagine from L-aspartate (L-Gln route): step 1/1. In terms of biological role, could play a role in remobilization of nitrogen in flowers during senescence. The sequence is that of Asparagine synthetase [glutamine-hydrolyzing] (AND1) from Sandersonia aurantiaca (Christmas-bells).